We begin with the raw amino-acid sequence, 179 residues long: Orotate phosphoribosyltransferase (179 aa).

Residues Arg24, Arg89, Lys90, Lys93, and 115-123 (EDVITTGGA) each bind 5-phospho-alpha-D-ribose 1-diphosphate. Orotate contacts are provided by Thr119 and Arg147.

Belongs to the purine/pyrimidine phosphoribosyltransferase family. PyrE subfamily. Homodimer. Mg(2+) serves as cofactor.

It carries out the reaction orotidine 5'-phosphate + diphosphate = orotate + 5-phospho-alpha-D-ribose 1-diphosphate. Its pathway is pyrimidine metabolism; UMP biosynthesis via de novo pathway; UMP from orotate: step 1/2. Catalyzes the transfer of a ribosyl phosphate group from 5-phosphoribose 1-diphosphate to orotate, leading to the formation of orotidine monophosphate (OMP). The chain is Orotate phosphoribosyltransferase from Nocardioides sp. (strain ATCC BAA-499 / JS614).